Here is a 38-residue protein sequence, read N- to C-terminus: Mu-agatoxin-Hc1c (38 aa).

4 cysteine pairs are disulfide-bonded: Cys3–Cys19, Cys10–Cys24, Cys18–Cys34, and Cys26–Cys32. Ser38 is subject to Serine amide.

The protein belongs to the neurotoxin 07 (Beta/delta-agtx) family. 02 (aga-3) subfamily. As to expression, expressed by the venom gland.

The protein localises to the secreted. Insecticidal neurotoxin that induces irreversible neuromuscular blockade in house crickets (A.domesticus). Modifies presynaptic voltage-gated sodium channels (Nav), causing them to open at the normal resting potential of the nerve. This leads to spontaneous release of neurotransmitter and repetitive action potentials in motor neurons. In Hololena curta (Funnel-web spider), this protein is Mu-agatoxin-Hc1c.